The following is a 345-amino-acid chain: Putative F-box protein At3g17265 (345 aa).

One can recognise an F-box domain in the interval 1-46; sequence MMFAYLPPDLESEILSRVPATFLKELQTTCKRWYALFRDPIFVKKN.

The sequence is that of Putative F-box protein At3g17265 from Arabidopsis thaliana (Mouse-ear cress).